A 169-amino-acid polypeptide reads, in one-letter code: Putative phosphoesterase SACOL1020 (169 aa).

His34 functions as the Proton donor in the catalytic mechanism. 2 short sequence motifs (HXTX) span residues 34-37 (HVTI) and 115-118 (HFTI). The active-site Proton acceptor is the His115.

Belongs to the 2H phosphoesterase superfamily. YjcG family.

This chain is Putative phosphoesterase SACOL1020, found in Staphylococcus aureus (strain COL).